A 388-amino-acid polypeptide reads, in one-letter code: S-adenosylmethionine synthase (388 aa).

Position 17 (H17) interacts with ATP. D19 lines the Mg(2+) pocket. Residue E45 coordinates K(+). L-methionine contacts are provided by E58 and Q106. The interval 106 to 116 (QSAHISQGVDR) is flexible loop. ATP contacts are provided by residues 166–168 (DAK), D241, 247–248 (RK), A264, and K268. An L-methionine-binding site is contributed by D241. K272 is an L-methionine binding site.

This sequence belongs to the AdoMet synthase family. In terms of assembly, homotetramer; dimer of dimers. Mg(2+) serves as cofactor. The cofactor is K(+).

It localises to the cytoplasm. The enzyme catalyses L-methionine + ATP + H2O = S-adenosyl-L-methionine + phosphate + diphosphate. It functions in the pathway amino-acid biosynthesis; S-adenosyl-L-methionine biosynthesis; S-adenosyl-L-methionine from L-methionine: step 1/1. Its function is as follows. Catalyzes the formation of S-adenosylmethionine (AdoMet) from methionine and ATP. The overall synthetic reaction is composed of two sequential steps, AdoMet formation and the subsequent tripolyphosphate hydrolysis which occurs prior to release of AdoMet from the enzyme. The sequence is that of S-adenosylmethionine synthase from Paracoccus denitrificans (strain Pd 1222).